We begin with the raw amino-acid sequence, 383 residues long: MNCPHYQTQTCISCRWLETPYADQLTQKQTHLQQQISILDQSRLEWIPPFQSAQSGFRNKAKMVVNGTVERPILGIINERNQPADLTDCPLYPARFAEIFSVLKDFIGRAGLVPYNIAKQKGELKYILLTESRANQTLMLRFVLRSETKLPLMRRELAGLSTKIPDLAVVTANIQPQHAAILEGQKEIFLTEQQVLEERFNGIPLFIRPQGFFQTNPAVAEGLYGTAQNWVKNLPVQRLWDLFCGVGGFGLHCAAALQANTPDVALTGIEISPSAIYSAALSAEKCGLKNVSFQSLDAANFALNQDDKPDLVIVNPPRRGIGKPLAEFLNNLRPQFLLYSSCNAVTMGSDLQSLTHYQMRKIRLFDMFPHTAHYEVLTLLTLK.

[4Fe-4S] cluster is bound by residues cysteine 3, cysteine 11, cysteine 14, and cysteine 89. Positions 214, 243, 270, and 315 each coordinate S-adenosyl-L-methionine. Cysteine 342 (nucleophile) is an active-site residue.

This sequence belongs to the class I-like SAM-binding methyltransferase superfamily. RNA M5U methyltransferase family. RlmC subfamily.

The enzyme catalyses uridine(747) in 23S rRNA + S-adenosyl-L-methionine = 5-methyluridine(747) in 23S rRNA + S-adenosyl-L-homocysteine + H(+). In terms of biological role, catalyzes the formation of 5-methyl-uridine at position 747 (m5U747) in 23S rRNA. This Actinobacillus succinogenes (strain ATCC 55618 / DSM 22257 / CCUG 43843 / 130Z) protein is 23S rRNA (uracil(747)-C(5))-methyltransferase RlmC.